Consider the following 702-residue polypeptide: Ribosomal RNA large subunit methyltransferase K/L (702 aa).

The 112-residue stretch at 43–154 folds into the THUMP domain; sequence LVYQSLMWSR…KETASIALDL (112 aa).

It belongs to the methyltransferase superfamily. RlmKL family.

It is found in the cytoplasm. It catalyses the reaction guanosine(2445) in 23S rRNA + S-adenosyl-L-methionine = N(2)-methylguanosine(2445) in 23S rRNA + S-adenosyl-L-homocysteine + H(+). It carries out the reaction guanosine(2069) in 23S rRNA + S-adenosyl-L-methionine = N(2)-methylguanosine(2069) in 23S rRNA + S-adenosyl-L-homocysteine + H(+). Specifically methylates the guanine in position 2445 (m2G2445) and the guanine in position 2069 (m7G2069) of 23S rRNA. This is Ribosomal RNA large subunit methyltransferase K/L from Shigella sonnei (strain Ss046).